Consider the following 430-residue polypeptide: Probable aspartic-type endopeptidase ARB_07403 (430 aa).

The N-terminal stretch at 1-17 (MHVSTLLVAVLLPLALS) is a signal peptide. A propeptide spans 18-87 (KPTPRKKTGS…SKATAGSGKE (70 aa)) (activation peptide). The segment at 66–105 (YHPQHISKLPGNSKATAGSGKEGVESQDEKGEVVNNPTNH) is disordered. A compositionally biased stretch (basic and acidic residues) spans 87-97 (EGVESQDEKGE). The region spanning 109–427 (FLSPVTIGGQ…DQRGPSISLA (319 aa)) is the Peptidase A1 domain. The active site involves Asp125. Asn306 carries an N-linked (GlcNAc...) asparagine glycan. Residue Asp314 is part of the active site.

The protein belongs to the peptidase A1 family.

Its subcellular location is the secreted. Its function is as follows. Probable secreted aspartic-type endopeptidase which contributes to virulence. The protein is Probable aspartic-type endopeptidase ARB_07403 of Arthroderma benhamiae (strain ATCC MYA-4681 / CBS 112371) (Trichophyton mentagrophytes).